The primary structure comprises 475 residues: Aspartyl/glutamyl-tRNA(Asn/Gln) amidotransferase subunit B (475 aa).

Belongs to the GatB/GatE family. GatB subfamily. In terms of assembly, heterotrimer of A, B and C subunits.

It carries out the reaction L-glutamyl-tRNA(Gln) + L-glutamine + ATP + H2O = L-glutaminyl-tRNA(Gln) + L-glutamate + ADP + phosphate + H(+). It catalyses the reaction L-aspartyl-tRNA(Asn) + L-glutamine + ATP + H2O = L-asparaginyl-tRNA(Asn) + L-glutamate + ADP + phosphate + 2 H(+). Allows the formation of correctly charged Asn-tRNA(Asn) or Gln-tRNA(Gln) through the transamidation of misacylated Asp-tRNA(Asn) or Glu-tRNA(Gln) in organisms which lack either or both of asparaginyl-tRNA or glutaminyl-tRNA synthetases. The reaction takes place in the presence of glutamine and ATP through an activated phospho-Asp-tRNA(Asn) or phospho-Glu-tRNA(Gln). This is Aspartyl/glutamyl-tRNA(Asn/Gln) amidotransferase subunit B from Thermoanaerobacter pseudethanolicus (strain ATCC 33223 / 39E) (Clostridium thermohydrosulfuricum).